The chain runs to 135 residues: NADH-quinone oxidoreductase subunit A (135 aa).

3 helical membrane passes run 9–29, 67–87, and 97–117; these read YFPILLQAVIAMGLAAGLLTV, VGMLFILFDIEAIFLYPWVVV, and LFGFYEMLTFVILILSGFFYI.

This sequence belongs to the complex I subunit 3 family. In terms of assembly, NDH-1 is composed of 14 different subunits. Subunits NuoA, H, J, K, L, M, N constitute the membrane sector of the complex.

The protein resides in the cell inner membrane. The enzyme catalyses a quinone + NADH + 5 H(+)(in) = a quinol + NAD(+) + 4 H(+)(out). NDH-1 shuttles electrons from NADH, via FMN and iron-sulfur (Fe-S) centers, to quinones in the respiratory chain. The immediate electron acceptor for the enzyme in this species is believed to be ubiquinone. Couples the redox reaction to proton translocation (for every two electrons transferred, four hydrogen ions are translocated across the cytoplasmic membrane), and thus conserves the redox energy in a proton gradient. The sequence is that of NADH-quinone oxidoreductase subunit A from Solibacter usitatus (strain Ellin6076).